The following is a 125-amino-acid chain: Protein ApaG (125 aa).

An ApaG domain is found at 1 to 125; that stretch reads MADSPRVCVQ…FRLAVPTLIH (125 aa).

In Cronobacter sakazakii (strain ATCC BAA-894) (Enterobacter sakazakii), this protein is Protein ApaG.